Consider the following 355-residue polypeptide: Peptide chain release factor 1 (355 aa).

Gln229 carries the post-translational modification N5-methylglutamine. Residues 280–299 (LDRERSAARKGQVGSGDRSE) are disordered.

The protein belongs to the prokaryotic/mitochondrial release factor family. In terms of processing, methylated by PrmC. Methylation increases the termination efficiency of RF1.

The protein resides in the cytoplasm. Its function is as follows. Peptide chain release factor 1 directs the termination of translation in response to the peptide chain termination codons UAG and UAA. The chain is Peptide chain release factor 1 from Parvibaculum lavamentivorans (strain DS-1 / DSM 13023 / NCIMB 13966).